We begin with the raw amino-acid sequence, 188 residues long: Trafficking protein particle complex subunit 5 (188 aa).

Residue S10 is modified to Phosphoserine.

It belongs to the TRAPP small subunits family. BET3 subfamily. As to quaternary structure, component of the multisubunit TRAPP (transport protein particle) complex, which includes at least TRAPPC2, TRAPPC2L, TRAPPC3, TRAPPC3L, TRAPPC4, TRAPPC5, TRAPPC8, TRAPPC9, TRAPPC10, TRAPPC11 and TRAPPC12.

Its subcellular location is the golgi apparatus. The protein resides in the cis-Golgi network. The protein localises to the endoplasmic reticulum. Functionally, may play a role in vesicular transport from endoplasmic reticulum to Golgi. The polypeptide is Trafficking protein particle complex subunit 5 (TRAPPC5) (Homo sapiens (Human)).